The following is a 134-amino-acid chain: MKKTPLLNVALSRLIASLGHGDVVVIGDAGLPVPPGVELIDLALTHGVPDFVSTLKVVLSEMQVESHALAKEIFDKQPTALSTLDELNDEGSLGRRDLLSHEQFKVLSRQARAIVRTGECQPYCNIVLVAGVTF.

Histidine 20 (proton donor) is an active-site residue. Substrate contacts are provided by residues aspartate 28, histidine 101, and 123-125 (YCN).

It belongs to the RbsD / FucU family. RbsD subfamily. As to quaternary structure, homodecamer.

It localises to the cytoplasm. It catalyses the reaction beta-D-ribopyranose = beta-D-ribofuranose. The protein operates within carbohydrate metabolism; D-ribose degradation; D-ribose 5-phosphate from beta-D-ribopyranose: step 1/2. In terms of biological role, catalyzes the interconversion of beta-pyran and beta-furan forms of D-ribose. The protein is D-ribose pyranase of Pseudomonas fluorescens (strain Pf0-1).